A 541-amino-acid polypeptide reads, in one-letter code: Glutamyl-tRNA(Gln) amidotransferase subunit B, mitochondrial (541 aa).

Belongs to the GatB/GatE family. GatB subfamily. As to quaternary structure, subunit of the heterotrimeric GatFAB amidotransferase (AdT) complex, composed of A (HER2), B (PET112) and F (YGR102C) subunits.

It localises to the mitochondrion. The catalysed reaction is L-glutamyl-tRNA(Gln) + L-glutamine + ATP + H2O = L-glutaminyl-tRNA(Gln) + L-glutamate + ADP + phosphate + H(+). Functionally, allows the formation of correctly charged Gln-tRNA(Gln) through the transamidation of misacylated Glu-tRNA(Gln) in the mitochondria. The reaction takes place in the presence of glutamine and ATP through an activated gamma-phospho-Glu-tRNA(Gln). The polypeptide is Glutamyl-tRNA(Gln) amidotransferase subunit B, mitochondrial (Saccharomyces cerevisiae (strain ATCC 204508 / S288c) (Baker's yeast)).